A 478-amino-acid chain; its full sequence is Glutamate--tRNA ligase (478 aa).

Residues Pro-8–Asn-18 carry the 'HIGH' region motif. Positions Lys-248–Arg-252 match the 'KMSKS' region motif. Lys-251 is a binding site for ATP.

It belongs to the class-I aminoacyl-tRNA synthetase family. Glutamate--tRNA ligase type 1 subfamily. As to quaternary structure, monomer.

It localises to the cytoplasm. The enzyme catalyses tRNA(Glu) + L-glutamate + ATP = L-glutamyl-tRNA(Glu) + AMP + diphosphate. Catalyzes the attachment of glutamate to tRNA(Glu) in a two-step reaction: glutamate is first activated by ATP to form Glu-AMP and then transferred to the acceptor end of tRNA(Glu). The polypeptide is Glutamate--tRNA ligase (Sulfurihydrogenibium sp. (strain YO3AOP1)).